The primary structure comprises 260 residues: Transcriptional activator protein AsaR (260 aa).

An HTH luxR-type domain is found at 176-241; that stretch reads EDDPQEALTD…QAIAKGVSSG (66 aa). Positions 200-219 form a DNA-binding region, H-T-H motif; the sequence is SGEIACILGITERTVNYHLN.

The protein belongs to the autoinducer-regulated transcriptional regulatory protein family.

Functions as a BHL-responsive transcriptional regulator. The chain is Transcriptional activator protein AsaR from Aeromonas salmonicida.